Consider the following 441-residue polypeptide: Proline--tRNA ligase (441 aa).

Belongs to the class-II aminoacyl-tRNA synthetase family. ProS type 2 subfamily. Homodimer.

It is found in the cytoplasm. The catalysed reaction is tRNA(Pro) + L-proline + ATP = L-prolyl-tRNA(Pro) + AMP + diphosphate. Catalyzes the attachment of proline to tRNA(Pro) in a two-step reaction: proline is first activated by ATP to form Pro-AMP and then transferred to the acceptor end of tRNA(Pro). The protein is Proline--tRNA ligase of Bartonella bacilliformis (strain ATCC 35685 / KC583 / Herrer 020/F12,63).